We begin with the raw amino-acid sequence, 667 residues long: Endogenous retrovirus group K member 5 Gag polyprotein (667 aa).

A lipid anchor (N-myristoyl glycine) is attached at Gly2. Residues 166 to 188 are disordered; sequence KGPELVGPSESKPRGPSPLPAGQ. 2 CCHC-type zinc fingers span residues 543–560 and 580–597; these read KKCY…SCPV and GLCP…QCHS. The disordered stretch occupies residues 598 to 667; it reads KFDKDGQPLS…CPAPQQAAPQ (70 aa). The segment covering 648–667 has biased composition (polar residues); that stretch reads GVSQLQQSNSCPAPQQAAPQ.

The protein belongs to the beta type-B retroviral Gag protein family. HERV class-II K(HML-2) gag subfamily. Post-translationally, myristoylation is essential for retroviral assembly. Alteration of the glycine residue leads to a block in the budding of particles and an accumulation of Gag inside the cell. Specific enzymatic cleavages may yield mature proteins.

The protein localises to the cell membrane. Functionally, the products of the Gag polyproteins of infectious retroviruses perform highly complex orchestrated tasks during the assembly, budding, maturation, and infection stages of the viral replication cycle. During viral assembly, the proteins form membrane associations and self-associations that ultimately result in budding of an immature virion from the infected cell. Gag precursors also function during viral assembly to selectively bind and package two plus strands of genomic RNA. Endogenous Gag proteins may have kept, lost or modified their original function during evolution. The polypeptide is Endogenous retrovirus group K member 5 Gag polyprotein (ERVK-5) (Homo sapiens (Human)).